Here is a 149-residue protein sequence, read N- to C-terminus: Transcriptional repressor NrdR (149 aa).

A zinc finger lies at 3–34; sequence CPFCSATDTKVIDSRLVADGHQVRRRRECAEC. In terms of domain architecture, ATP-cone spans 49–139; it reads PRVVKQDGSR…VYRAFEDVSE (91 aa).

This sequence belongs to the NrdR family. It depends on Zn(2+) as a cofactor.

Negatively regulates transcription of bacterial ribonucleotide reductase nrd genes and operons by binding to NrdR-boxes. This chain is Transcriptional repressor NrdR, found in Shewanella woodyi (strain ATCC 51908 / MS32).